Reading from the N-terminus, the 70-residue chain is MNYIAAGIALCGSAIGAGIGNGMLMAKLIESIARQPELEGNLRTNMFISMALVEAMPIIVIAMSFVLINE.

The next 2 helical transmembrane spans lie at 4–24 and 48–68; these read IAAGIALCGSAIGAGIGNGML and ISMALVEAMPIIVIAMSFVLI.

Belongs to the ATPase C chain family. In terms of assembly, F-type ATPases have 2 components, F(1) - the catalytic core - and F(0) - the membrane proton channel. F(1) has five subunits: alpha(3), beta(3), gamma(1), delta(1), epsilon(1). F(0) has three main subunits: a(1), b(2) and c(10-14). The alpha and beta chains form an alternating ring which encloses part of the gamma chain. F(1) is attached to F(0) by a central stalk formed by the gamma and epsilon chains, while a peripheral stalk is formed by the delta and b chains.

It is found in the cell membrane. Its function is as follows. F(1)F(0) ATP synthase produces ATP from ADP in the presence of a proton or sodium gradient. F-type ATPases consist of two structural domains, F(1) containing the extramembraneous catalytic core and F(0) containing the membrane proton channel, linked together by a central stalk and a peripheral stalk. During catalysis, ATP synthesis in the catalytic domain of F(1) is coupled via a rotary mechanism of the central stalk subunits to proton translocation. In terms of biological role, key component of the F(0) channel; it plays a direct role in translocation across the membrane. A homomeric c-ring of between 10-14 subunits forms the central stalk rotor element with the F(1) delta and epsilon subunits. In Oenococcus oeni (strain ATCC BAA-331 / PSU-1), this protein is ATP synthase subunit c.